Consider the following 341-residue polypeptide: tRNA N6-adenosine threonylcarbamoyltransferase (341 aa).

Fe cation-binding residues include H111 and H115. Substrate is bound by residues 134 to 138 (LVSGG), D167, G180, and N276. D304 lines the Fe cation pocket.

This sequence belongs to the KAE1 / TsaD family. The cofactor is Fe(2+).

The protein resides in the cytoplasm. The enzyme catalyses L-threonylcarbamoyladenylate + adenosine(37) in tRNA = N(6)-L-threonylcarbamoyladenosine(37) in tRNA + AMP + H(+). Required for the formation of a threonylcarbamoyl group on adenosine at position 37 (t(6)A37) in tRNAs that read codons beginning with adenine. Is involved in the transfer of the threonylcarbamoyl moiety of threonylcarbamoyl-AMP (TC-AMP) to the N6 group of A37, together with TsaE and TsaB. TsaD likely plays a direct catalytic role in this reaction. This is tRNA N6-adenosine threonylcarbamoyltransferase from Azotobacter vinelandii (strain DJ / ATCC BAA-1303).